We begin with the raw amino-acid sequence, 539 residues long: Zinc finger and BTB domain-containing protein 7B (539 aa).

The BTB domain occupies 34–115 (CDLTIRTQGL…AYTATLTTSS (82 aa)). The residue at position 150 (Ser-150) is a Phosphoserine. The disordered stretch occupies residues 171–308 (ASGVPNGEDS…SPEELGSDED (138 aa)). Pro residues predominate over residues 182–196 (PQVPLPPPPPPPPRP). Basic residues predominate over residues 197-206 (VARRSRKPRK). An N6-acetyllysine; by EP300; alternate mark is found at Lys-206 and Lys-212. Residues Lys-206 and Lys-212 each participate in a glycyl lysine isopeptide (Lys-Gly) (interchain with G-Cter in ubiquitin); alternate cross-link. Residues 273 to 282 (YEGEEEEEEL) are compositionally biased toward acidic residues. Lys-335 carries the post-translational modification N6-acetyllysine; by EP300; alternate. A Glycyl lysine isopeptide (Lys-Gly) (interchain with G-Cter in ubiquitin); alternate cross-link involves residue Lys-335. Residues 344-400 (MPQECPVCHKIIHGAGKLPRHMRTHTGEKPFACEVCGVRFTRNDKLKIHMRKHTGER) are required for interaction with and acetylation by EP300. The C2H2-type 1 zinc-finger motif lies at 346–368 (QECPVCHKIIHGAGKLPRHMRTH). At Thr-369 the chain carries Phosphothreonine. 2 consecutive C2H2-type zinc fingers follow at residues 374–396 (FACE…MRKH) and 402–424 (YSCP…MHLH). A C2H2-type 4; atypical zinc finger spans residues 430–454 (YECHLCHKAFAKEDHLQRHLKGQNC). Disordered regions lie at residues 458–486 (RTRR…GLDL) and 501–539 (FWEQ…MESS). A compositionally biased stretch (pro residues) spans 508 to 517 (TGPPVSTPGP).

Homodimerizes. Interacts with NCL, NEDD4 and YBX1. Interacts with HNRNPU (via RNA-binding RGG-box region); the interaction facilitates the recruitment of long non-coding RNA Blnc1 by ZBTB7B. Interacts with HDAC4 and HDAC5; the interaction allows the recruitment of HDAC4 and HDAC5 on CD8 loci for deacetylation and possible inhibition of CD8 genes expression. Post-translationally, acetylated directly and specifically by EP300. EP300-mediated acetylation of Lys-206, Lys-212 and Lys-335 stabilizes the protein by antagonizing ubiquitin conjugation. In terms of processing, ubiquitinated, leading to proteasomal degradation. Competes with acetylation on Lys-206, Lys-212 and Lys-335.

It localises to the nucleus. In terms of biological role, transcription regulator that acts as a key regulator of lineage commitment of immature T-cell precursors. Exerts distinct biological functions in the mammary epithelial cells and T cells in a tissue-specific manner. Necessary and sufficient for commitment of CD4 lineage, while its absence causes CD8 commitment. Development of immature T-cell precursors (thymocytes) to either the CD4 helper or CD8 killer T-cell lineages correlates precisely with their T-cell receptor specificity for major histocompatibility complex class II or class I molecules, respectively. Cross-antagonism between ZBTB7B and CBF complexes are determinative to CD4 versus CD8 cell fate decision. Suppresses RUNX3 expression and imposes CD4+ lineage fate by inducing the SOCS suppressors of cytokine signaling. induces, as a transcriptional activator, SOCS genes expression which represses RUNX3 expression and promotes the CD4+ lineage fate. During CD4 lineage commitment, associates with multiple sites at the CD8 locus, acting as a negative regulator of the CD8 promoter and enhancers by epigenetic silencing through the recruitment of class II histone deacetylases, such as HDAC4 and HDAC5, to these loci. Regulates the development of IL17-producing CD1d-restricted naural killer (NK) T cells. Also functions as an important metabolic regulator in the lactating mammary glands. Critical feed-forward regulator of insulin signaling in mammary gland lactation, directly regulates expression of insulin receptor substrate-1 (IRS-1) and insulin-induced Akt-mTOR-SREBP signaling. Transcriptional repressor of the collagen COL1A1 and COL1A2 genes. May also function as a repressor of fibronectin and possibly other extracellular matrix genes. Potent driver of brown fat development, thermogenesis and cold-induced beige fat formation. Recruits the brown fat lncRNA 1 (Blnc1):HNRNPU ribonucleoprotein complex to activate thermogenic gene expression in brown and beige adipocytes. This is Zinc finger and BTB domain-containing protein 7B from Homo sapiens (Human).